We begin with the raw amino-acid sequence, 274 residues long: Thiamine kinase (274 aa).

Belongs to the thiamine kinase family.

The catalysed reaction is thiamine + ATP = thiamine phosphate + ADP + H(+). It functions in the pathway cofactor biosynthesis; thiamine diphosphate biosynthesis; thiamine phosphate from thiamine: step 1/1. Functionally, catalyzes the ATP-dependent phosphorylation of thiamine to thiamine phosphate. Is involved in thiamine salvage. The polypeptide is Thiamine kinase (Salmonella typhimurium (strain LT2 / SGSC1412 / ATCC 700720)).